The sequence spans 187 residues: uncharacterized protein (187 aa).

The interval M1–G95 is disordered. The segment covering R46 to K80 has biased composition (basic residues).

The protein localises to the mitochondrion. This is an uncharacterized protein from Arabidopsis thaliana (Mouse-ear cress).